The chain runs to 775 residues: Glutamine--tRNA ligase (775 aa).

The residue at position 2 (A2) is an N-acetylalanine. At S70 the chain carries Phosphoserine. ATP is bound by residues 271–273 (EPN) and 277–283 (HIGHAKA). Residue D303 coordinates L-glutamine. Position 309 is an N6-acetyllysine (K309). Y438 lines the L-glutamine pocket. Residues T457, 486–487 (RL), and 494–496 (VSK) each bind ATP. A Phosphoserine modification is found at S495.

The protein belongs to the class-I aminoacyl-tRNA synthetase family. As to quaternary structure, monomer. Part of a multisubunit complex that groups tRNA ligases for Arg (RARS1), Asp (DARS1), Gln (QARS1), Ile (IARS1), Leu (LARS1), Lys (KARS1), Met (MARS1) the bifunctional ligase for Glu and Pro (EPRS1) and the auxiliary subunits AIMP1/p43, AIMP2/p38 and EEF1E1/p18. Interacts with RARS1. Part of a complex composed of RARS1, QARS1 and AIMP1. In terms of tissue distribution, detected in dorsal root ganglia (at protein level). Detected in dorsal root ganglia.

The protein resides in the cytoplasm. Its subcellular location is the cytosol. The catalysed reaction is tRNA(Gln) + L-glutamine + ATP = L-glutaminyl-tRNA(Gln) + AMP + diphosphate. Its function is as follows. Glutamine--tRNA ligase. Plays a critical role in brain development. The polypeptide is Glutamine--tRNA ligase (Qars1) (Rattus norvegicus (Rat)).